Here is a 197-residue protein sequence, read N- to C-terminus: Outer-membrane lipoprotein LolB (197 aa).

A signal peptide spans 1 to 20 (MNRSRRLALFCLGAPLLLQA). Cys-21 carries N-palmitoyl cysteine lipidation. Residue Cys-21 is the site of S-diacylglycerol cysteine attachment.

The protein belongs to the LolB family. In terms of assembly, monomer.

It is found in the cell outer membrane. Plays a critical role in the incorporation of lipoproteins in the outer membrane after they are released by the LolA protein. The chain is Outer-membrane lipoprotein LolB from Cupriavidus necator (strain ATCC 17699 / DSM 428 / KCTC 22496 / NCIMB 10442 / H16 / Stanier 337) (Ralstonia eutropha).